Reading from the N-terminus, the 385-residue chain is Probable nitrate transporter NarT (385 aa).

12 helical membrane passes run Thr-14–Ile-34, Ile-47–Thr-67, Ile-69–Phe-89, Gly-97–Val-117, Gly-139–Trp-159, Thr-161–Gly-181, Leu-205–Phe-225, Gly-246–Phe-266, Ile-277–Ile-297, Ile-302–Ala-322, Gly-330–Val-350, and Leu-359–Tyr-379.

This sequence belongs to the major facilitator superfamily. Nitrate/nitrite porter (TC 2.A.1.8) family.

It is found in the cell membrane. In terms of biological role, probably required for nitrate uptake under anoxic conditions. Also possibly involved in excretion of nitrite produced by the dissimilatory reduction of nitrate. This Staphylococcus haemolyticus (strain JCSC1435) protein is Probable nitrate transporter NarT (narT).